The following is a 96-amino-acid chain: Small ribosomal subunit protein bS18 (96 aa).

This sequence belongs to the bacterial ribosomal protein bS18 family. In terms of assembly, part of the 30S ribosomal subunit. Forms a tight heterodimer with protein bS6.

Binds as a heterodimer with protein bS6 to the central domain of the 16S rRNA, where it helps stabilize the platform of the 30S subunit. This is Small ribosomal subunit protein bS18 from Borreliella afzelii (strain PKo) (Borrelia afzelii).